A 110-amino-acid polypeptide reads, in one-letter code: Large ribosomal subunit protein uL22 (110 aa).

The protein belongs to the universal ribosomal protein uL22 family. In terms of assembly, part of the 50S ribosomal subunit.

Its function is as follows. This protein binds specifically to 23S rRNA; its binding is stimulated by other ribosomal proteins, e.g. L4, L17, and L20. It is important during the early stages of 50S assembly. It makes multiple contacts with different domains of the 23S rRNA in the assembled 50S subunit and ribosome. In terms of biological role, the globular domain of the protein is located near the polypeptide exit tunnel on the outside of the subunit, while an extended beta-hairpin is found that lines the wall of the exit tunnel in the center of the 70S ribosome. The polypeptide is Large ribosomal subunit protein uL22 (Photobacterium profundum (strain SS9)).